Reading from the N-terminus, the 155-residue chain is RNA pyrophosphohydrolase (155 aa).

In terms of domain architecture, Nudix hydrolase spans 6–148 (GYRANVAIVL…KQEVYRKALT (143 aa)). A Nudix box motif is present at residues 38–59 (GGVDTGETPLQAMYRELHEEIG).

This sequence belongs to the Nudix hydrolase family. RppH subfamily. The cofactor is a divalent metal cation.

Accelerates the degradation of transcripts by removing pyrophosphate from the 5'-end of triphosphorylated RNA, leading to a more labile monophosphorylated state that can stimulate subsequent ribonuclease cleavage. The protein is RNA pyrophosphohydrolase of Francisella tularensis subsp. mediasiatica (strain FSC147).